Here is a 157-residue protein sequence, read N- to C-terminus: MTASNRRGSTHRNSVTQLNKVLPVPIQLEDETSSGHFNSTSHITDVLVGDYHVIQGEGGSSYVVWSIRIIVDDSVYSSMVIYKRYSDIQRFREALLEHYPNTEIPPLPPKDNFSFQRLSMSDYWLENRRKGLQWFMTNVMLNPKHQHSPVITHFILN.

Residues 43-157 (ITDVLVGDYH…SPVITHFILN (115 aa)) enclose the PX domain.

Belongs to the YPT35 family.

The protein resides in the endosome membrane. Its subcellular location is the vacuole membrane. Functionally, recruits the lipid transfer protein VPS13 to endosomal and vacuolar membranes. This Debaryomyces hansenii (strain ATCC 36239 / CBS 767 / BCRC 21394 / JCM 1990 / NBRC 0083 / IGC 2968) (Yeast) protein is Endosomal/vacuolar adapter protein YPT35 (YPT35).